Reading from the N-terminus, the 270-residue chain is Interleukin-1 alpha (270 aa).

Residues 1 to 114 (MAKVPDLFED…HDLEETIQPR (114 aa)) constitute a propeptide that is removed on maturation. N-linked (GlcNAc...) asparagine glycosylation is present at asparagine 46. Lysine 85 is subject to N6-acetyllysine. Residues 85–89 (KKRRL) are nuclear localization signal (NLS). Residue serine 90 is modified to Phosphoserine. An N-linked (GlcNAc...) asparagine glycan is attached at asparagine 139.

The protein belongs to the IL-1 family. As to quaternary structure, monomer. Interacts with TMED10; the interaction mediates the translocation from the cytoplasm into the ERGIC (endoplasmic reticulum-Golgi intermediate compartment) and thereby secretion. Interacts with IL1R1. Interacts with S100A13; this interaction is the first step in the export of IL1A, followed by direct translocation of this complex across the plasma membrane. Acetylated within its nuclear localization sequence, which impacts subcellular localization. In terms of processing, proteolytic processed by CAPN1 in a calcium-dependent manner. Cleavage from 31 kDa precursor to 18 kDa biologically active molecules. Post-translationally, phosphorylated. Phosphorylation greatly enhances susceptibility to digestion and promotes the conversion of pre-IL1A alpha to the biologically active IL1A.

Its subcellular location is the nucleus. The protein resides in the cytoplasm. It localises to the secreted. Cytokine constitutively present intracellularly in nearly all resting non-hematopoietic cells that plays an important role in inflammation and bridges the innate and adaptive immune systems. After binding to its receptor IL1R1 together with its accessory protein IL1RAP, forms the high affinity interleukin-1 receptor complex. Signaling involves the recruitment of adapter molecules such as MYD88, IRAK1 or IRAK4. In turn, mediates the activation of NF-kappa-B and the three MAPK pathways p38, p42/p44 and JNK pathways. Within the cell, acts as an alarmin and cell death results in its liberation in the extracellular space after disruption of the cell membrane to induce inflammation and alert the host to injury or damage. In addition to its role as a danger signal, which occurs when the cytokine is passively released by cell necrosis, directly senses DNA damage and acts as signal for genotoxic stress without loss of cell integrity. The chain is Interleukin-1 alpha from Rattus norvegicus (Rat).